We begin with the raw amino-acid sequence, 2272 residues long: COPII coat assembly protein SEC16 (2272 aa).

The segment covering 1–20 has biased composition (basic residues); sequence MSTEAKRRRNQKKKQKQKQK. 11 disordered regions span residues 1-99, 124-401, 430-630, 646-714, 727-785, 832-852, 1488-1624, 1694-1737, 1750-1990, 2043-2125, and 2146-2187; these read MSTE…SPYV, AVDV…HTPE, VSSQ…HNLS, QQFL…EKKK, SKPK…NPYQ, EGAASGSQSQHPFPPQPLGAY, LNHG…PKRA, QDRR…YRKT, SLAP…EHAV, RASS…KPIK, and KDAT…VGGP. Over residues 151–170 the composition is skewed to low complexity; that stretch reads ATPAEPSAAPVAPEAAASEE. Basic and acidic residues-rich tracts occupy residues 215–237 and 318–339; these read PEQRPEMTEERPELPTFEEERTQ and EENRSRMEEHKESISGDERDQD. Positions 481–496 are enriched in polar residues; the sequence is AQNTNPNVDTSQQLPV. Low complexity predominate over residues 497–509; sequence SRSSAELSSSQAA. Positions 559–598 are enriched in acidic residues; the sequence is DNDDDLLNDDEEEEANAGDQPENDQENCDDDSFLDSDEEP. Positions 608–621 are enriched in polar residues; sequence TTYTPSTQVLGQDR. The span at 703 to 714 shows a compositional bias: basic and acidic residues; the sequence is ESVRRLEEEKKK. Residues 748–758 show a composition bias toward polar residues; that stretch reads QPASRSFSPSD. 3 stretches are compositionally biased toward polar residues: residues 1526–1554, 1582–1609, and 1699–1719; these read PGSNVFSVSRSNNHPHGTEHGNSMSNLHG, PQNSHLPNQQSNLPSPANGHSRNPSIPS, and SAYSASSQGILPSSRRSSNIS. Residues 1750–1761 are compositionally biased toward low complexity; sequence SLAPSSVSLSQS. Polar residues predominate over residues 1798–1815; sequence SVDTSEYSFPDESVQSWE. Residues 1972 to 1990 show a composition bias toward basic and acidic residues; sequence EEGRTDNQTKAVEKQEHAV. A compositionally biased stretch (acidic residues) spans 2061 to 2076; that stretch reads YYDDVVEDESDDSEEE. Composition is skewed to basic and acidic residues over residues 2077–2103, 2114–2123, and 2146–2155; these read SERKRQEKEKEEERKREAAEKEKRKNE, LKKDTNEKKP, and KDATEEEKQK.

It belongs to the SEC16 family.

It localises to the endoplasmic reticulum membrane. Functionally, involved in the initiation of assembly of the COPII coat required for the formation of transport vesicles from the endoplasmic reticulum (ER) and the selection of cargo molecules. Also involved in autophagy. This is COPII coat assembly protein SEC16 (SEC16) from Eremothecium gossypii (strain ATCC 10895 / CBS 109.51 / FGSC 9923 / NRRL Y-1056) (Yeast).